The chain runs to 263 residues: Complement control protein C3 (263 aa).

A signal peptide spans 1–19 (MKVESVTFLTLLGIGCVLS). 4 consecutive Sushi domains span residues 20 to 83 (CCTI…QCIK), 84 to 145 (RRCP…ICES), 146 to 203 (VKCQ…TCQI), and 204 to 263 (VKCP…KCVR). Intrachain disulfides connect Cys-21–Cys-70, Cys-54–Cys-81, Cys-86–Cys-126, Cys-112–Cys-143, Cys-148–Cys-190, Cys-176–Cys-201, Cys-206–Cys-248, and Cys-234–Cys-261.

Belongs to the receptors of complement activation (RCA) family. Heterodimer with A56 protein; disulfide-linked.

Its subcellular location is the virion membrane. It is found in the host cell membrane. The protein localises to the secreted. Functionally, serves to protect the virus against complement attack by inhibiting both classical and alternative pathways of complement activation. Binds C3b and C4b. The chain is Complement control protein C3 from Vaccinia virus (strain Copenhagen) (VACV).